The chain runs to 395 residues: Aspergillopepsin-1 (395 aa).

An N-terminal signal peptide occupies residues M1–A20. The propeptide at V21 to A70 is activation peptide. A Peptidase A1 domain is found at Y86–A392. Active-site residues include D102 and D284. A disulfide bridge connects residues C320 and C355.

The protein belongs to the peptidase A1 family. In terms of assembly, monomer.

It localises to the secreted. It carries out the reaction Hydrolysis of proteins with broad specificity. Generally favors hydrophobic residues in P1 and P1', but also accepts Lys in P1, which leads to activation of trypsinogen. Does not clot milk.. Functionally, secreted aspartic endopeptidase that allows assimilation of proteinaceous substrates. The scissile peptide bond is attacked by a nucleophilic water molecule activated by two aspartic residues in the active site. Shows a broad primary substrate specificity. Favors hydrophobic residues at the P1 and P1' positions, but also accepts a lysine residue in the P1 position, leading to the activation of trypsinogen and chymotrypsinogen A. The protein is Aspergillopepsin-1 (pepA) of Aspergillus fumigatus (strain CBS 144.89 / FGSC A1163 / CEA10) (Neosartorya fumigata).